The following is a 288-amino-acid chain: Tryptophan 2,3-dioxygenase (288 aa).

Residues 57–61 (FIIQH), Tyr-119, and Arg-123 each bind substrate. Residue His-246 participates in heme binding. Substrate is bound at residue Thr-260.

It belongs to the tryptophan 2,3-dioxygenase family. As to quaternary structure, homotetramer. Heme is required as a cofactor.

It carries out the reaction L-tryptophan + O2 = N-formyl-L-kynurenine. Its pathway is amino-acid degradation; L-tryptophan degradation via kynurenine pathway; L-kynurenine from L-tryptophan: step 1/2. Its function is as follows. Heme-dependent dioxygenase that catalyzes the oxidative cleavage of the L-tryptophan (L-Trp) pyrrole ring and converts L-tryptophan to N-formyl-L-kynurenine. Catalyzes the oxidative cleavage of the indole moiety. This Pseudomonas aeruginosa (strain ATCC 15692 / DSM 22644 / CIP 104116 / JCM 14847 / LMG 12228 / 1C / PRS 101 / PAO1) protein is Tryptophan 2,3-dioxygenase.